A 309-amino-acid polypeptide reads, in one-letter code: Homoserine O-succinyltransferase (309 aa).

The Acyl-thioester intermediate role is filled by C142. 2 residues coordinate substrate: K163 and S192. Residue H235 is the Proton acceptor of the active site. E237 is a catalytic residue. Residue R249 participates in substrate binding.

It belongs to the MetA family. As to quaternary structure, homodimer.

The protein localises to the cytoplasm. The enzyme catalyses L-homoserine + succinyl-CoA = O-succinyl-L-homoserine + CoA. The protein operates within amino-acid biosynthesis; L-methionine biosynthesis via de novo pathway; O-succinyl-L-homoserine from L-homoserine: step 1/1. Functionally, transfers a succinyl group from succinyl-CoA to L-homoserine, forming succinyl-L-homoserine. This chain is Homoserine O-succinyltransferase, found in Salmonella choleraesuis (strain SC-B67).